Consider the following 773-residue polypeptide: Lon protease homolog 2, peroxisomal (773 aa).

The 190-residue stretch at 9-198 (LPVILVTSGV…MCIKWMNEKK (190 aa)) folds into the Lon N-terminal domain. 336–343 (GPPGIGKT) lines the ATP pocket. The 180-residue stretch at 587–766 (PLPAGVCFGL…EDVIGAMMDK (180 aa)) folds into the Lon proteolytic domain. Active-site residues include Ser672 and Lys715. The short motif at 771–773 (AKL) is the Microbody targeting signal element.

Belongs to the peptidase S16 family.

The protein resides in the peroxisome matrix. It carries out the reaction Hydrolysis of proteins in presence of ATP.. ATP-dependent serine protease that mediates the selective degradation of misfolded and unassembled polypeptides in the peroxisomal matrix. Necessary for type 2 peroxisome targeting signal (PTS2)-containing protein processing and facilitates peroxisome matrix protein import. This chain is Lon protease homolog 2, peroxisomal, found in Caenorhabditis elegans.